We begin with the raw amino-acid sequence, 267 residues long: 2-keto-3-deoxy-L-rhamnonate aldolase (267 aa).

H49 serves as the catalytic Proton acceptor. Q151 contributes to the substrate binding site. Position 153 (E153) interacts with Mg(2+). Residues A178 and D179 each contribute to the substrate site. D179 is a binding site for Mg(2+).

It belongs to the HpcH/HpaI aldolase family. KDR aldolase subfamily. In terms of assembly, homohexamer. Mg(2+) is required as a cofactor.

It carries out the reaction 2-dehydro-3-deoxy-L-rhamnonate = (S)-lactaldehyde + pyruvate. Catalyzes the reversible retro-aldol cleavage of 2-keto-3-deoxy-L-rhamnonate (KDR) to pyruvate and lactaldehyde. In Salmonella dublin (strain CT_02021853), this protein is 2-keto-3-deoxy-L-rhamnonate aldolase.